A 284-amino-acid polypeptide reads, in one-letter code: Bifunctional protein FolD (284 aa).

Residues 165–167 and serine 190 contribute to the NADP(+) site; that span reads GRS.

Belongs to the tetrahydrofolate dehydrogenase/cyclohydrolase family. In terms of assembly, homodimer.

The enzyme catalyses (6R)-5,10-methylene-5,6,7,8-tetrahydrofolate + NADP(+) = (6R)-5,10-methenyltetrahydrofolate + NADPH. It catalyses the reaction (6R)-5,10-methenyltetrahydrofolate + H2O = (6R)-10-formyltetrahydrofolate + H(+). The protein operates within one-carbon metabolism; tetrahydrofolate interconversion. In terms of biological role, catalyzes the oxidation of 5,10-methylenetetrahydrofolate to 5,10-methenyltetrahydrofolate and then the hydrolysis of 5,10-methenyltetrahydrofolate to 10-formyltetrahydrofolate. The sequence is that of Bifunctional protein FolD from Streptococcus equi subsp. zooepidemicus (strain MGCS10565).